The sequence spans 220 residues: Ribonuclease HII (220 aa).

The 219-residue stretch at Met-1 to Lys-219 folds into the RNase H type-2 domain. Asp-7, Glu-8, and Asp-105 together coordinate a divalent metal cation.

This sequence belongs to the RNase HII family. Mn(2+) is required as a cofactor. The cofactor is Mg(2+).

The protein resides in the cytoplasm. It carries out the reaction Endonucleolytic cleavage to 5'-phosphomonoester.. In terms of biological role, endonuclease that specifically degrades the RNA of RNA-DNA hybrids. This Methanosarcina mazei (strain ATCC BAA-159 / DSM 3647 / Goe1 / Go1 / JCM 11833 / OCM 88) (Methanosarcina frisia) protein is Ribonuclease HII.